Consider the following 86-residue polypeptide: Small ribosomal subunit protein uS15 (86 aa).

Residues 1-10 (MSIDTQSIIE) show a composition bias toward polar residues. The segment at 1–21 (MSIDTQSIIENNKRSAHDTGS) is disordered.

The protein belongs to the universal ribosomal protein uS15 family. Part of the 30S ribosomal subunit. Forms a bridge to the 50S subunit in the 70S ribosome, contacting the 23S rRNA.

In terms of biological role, one of the primary rRNA binding proteins, it binds directly to 16S rRNA where it helps nucleate assembly of the platform of the 30S subunit by binding and bridging several RNA helices of the 16S rRNA. Functionally, forms an intersubunit bridge (bridge B4) with the 23S rRNA of the 50S subunit in the ribosome. The chain is Small ribosomal subunit protein uS15 from Xylella fastidiosa (strain 9a5c).